Here is a 355-residue protein sequence, read N- to C-terminus: uncharacterized protein (355 aa).

132 to 139 (GPPGCGKT) contacts ATP.

It belongs to the AAA ATPase family.

It is found in the mitochondrion. This is an uncharacterized protein from Schizosaccharomyces pombe (strain 972 / ATCC 24843) (Fission yeast).